A 288-amino-acid polypeptide reads, in one-letter code: Bifunctional protein FolD (288 aa).

NADP(+) contacts are provided by residues 166-168, Ser-191, and Ile-232; that span reads GRS.

The protein belongs to the tetrahydrofolate dehydrogenase/cyclohydrolase family. Homodimer.

The enzyme catalyses (6R)-5,10-methylene-5,6,7,8-tetrahydrofolate + NADP(+) = (6R)-5,10-methenyltetrahydrofolate + NADPH. It carries out the reaction (6R)-5,10-methenyltetrahydrofolate + H2O = (6R)-10-formyltetrahydrofolate + H(+). Its pathway is one-carbon metabolism; tetrahydrofolate interconversion. In terms of biological role, catalyzes the oxidation of 5,10-methylenetetrahydrofolate to 5,10-methenyltetrahydrofolate and then the hydrolysis of 5,10-methenyltetrahydrofolate to 10-formyltetrahydrofolate. The sequence is that of Bifunctional protein FolD from Rickettsia rickettsii (strain Iowa).